Reading from the N-terminus, the 80-residue chain is uncharacterized protein (80 aa).

2 helical membrane-spanning segments follow: residues 15 to 35 (ALGL…LSGV) and 45 to 65 (WFEM…WAMV).

It to H.influenzae HI_0974B.

It is found in the cell membrane. This is an uncharacterized protein from Escherichia coli (strain K12).